Reading from the N-terminus, the 289-residue chain is Probable endonuclease 4 (289 aa).

Zn(2+) is bound by residues H75, H115, E153, D187, H190, H224, D237, H239, and E269.

This sequence belongs to the AP endonuclease 2 family. The cofactor is Zn(2+).

It carries out the reaction Endonucleolytic cleavage to 5'-phosphooligonucleotide end-products.. Its function is as follows. Endonuclease IV plays a role in DNA repair. It cleaves phosphodiester bonds at apurinic or apyrimidinic (AP) sites, generating a 3'-hydroxyl group and a 5'-terminal sugar phosphate. This Chlamydia abortus (strain DSM 27085 / S26/3) (Chlamydophila abortus) protein is Probable endonuclease 4.